The primary structure comprises 311 residues: tRNA dimethylallyltransferase (311 aa).

12 to 19 (GPTASGKT) contacts ATP. 14-19 (TASGKT) contacts substrate. 3 interaction with substrate tRNA regions span residues 37-40 (DSAL), 161-165 (QRINR), and 241-246 (RCVGYR).

This sequence belongs to the IPP transferase family. In terms of assembly, monomer. Mg(2+) serves as cofactor.

It catalyses the reaction adenosine(37) in tRNA + dimethylallyl diphosphate = N(6)-dimethylallyladenosine(37) in tRNA + diphosphate. Functionally, catalyzes the transfer of a dimethylallyl group onto the adenine at position 37 in tRNAs that read codons beginning with uridine, leading to the formation of N6-(dimethylallyl)adenosine (i(6)A). This is tRNA dimethylallyltransferase from Histophilus somni (strain 129Pt) (Haemophilus somnus).